The chain runs to 121 residues: Small ribosomal subunit protein uS13 (121 aa).

Residues 97–121 (VRGQRTRTNARTRRGARKTVAGKKK) are disordered. Over residues 100-121 (QRTRTNARTRRGARKTVAGKKK) the composition is skewed to basic residues.

This sequence belongs to the universal ribosomal protein uS13 family. As to quaternary structure, part of the 30S ribosomal subunit. Forms a loose heterodimer with protein S19. Forms two bridges to the 50S subunit in the 70S ribosome.

Located at the top of the head of the 30S subunit, it contacts several helices of the 16S rRNA. In the 70S ribosome it contacts the 23S rRNA (bridge B1a) and protein L5 of the 50S subunit (bridge B1b), connecting the 2 subunits; these bridges are implicated in subunit movement. Contacts the tRNAs in the A and P-sites. In Synechococcus sp. (strain CC9311), this protein is Small ribosomal subunit protein uS13.